Reading from the N-terminus, the 184-residue chain is ATP synthase subunit b (184 aa).

Residues 25 to 45 traverse the membrane as a helical segment; the sequence is IFPSWPIMLATLVSFTILLVV.

It belongs to the ATPase B chain family. In terms of assembly, F-type ATPases have 2 components, F(1) - the catalytic core - and F(0) - the membrane proton channel. F(1) has five subunits: alpha(3), beta(3), gamma(1), delta(1), epsilon(1). F(0) has three main subunits: a(1), b(2) and c(10-14). The alpha and beta chains form an alternating ring which encloses part of the gamma chain. F(1) is attached to F(0) by a central stalk formed by the gamma and epsilon chains, while a peripheral stalk is formed by the delta and b chains.

The protein resides in the cell membrane. Its function is as follows. F(1)F(0) ATP synthase produces ATP from ADP in the presence of a proton or sodium gradient. F-type ATPases consist of two structural domains, F(1) containing the extramembraneous catalytic core and F(0) containing the membrane proton channel, linked together by a central stalk and a peripheral stalk. During catalysis, ATP synthesis in the catalytic domain of F(1) is coupled via a rotary mechanism of the central stalk subunits to proton translocation. Component of the F(0) channel, it forms part of the peripheral stalk, linking F(1) to F(0). The chain is ATP synthase subunit b from Mycoplasma mobile (strain ATCC 43663 / 163K / NCTC 11711) (Mesomycoplasma mobile).